Here is a 346-residue protein sequence, read N- to C-terminus: N-acetyl-gamma-glutamyl-phosphate reductase (346 aa).

The active site involves Cys-149.

Belongs to the NAGSA dehydrogenase family. Type 1 subfamily.

It is found in the cytoplasm. It catalyses the reaction N-acetyl-L-glutamate 5-semialdehyde + phosphate + NADP(+) = N-acetyl-L-glutamyl 5-phosphate + NADPH + H(+). Its pathway is amino-acid biosynthesis; L-arginine biosynthesis; N(2)-acetyl-L-ornithine from L-glutamate: step 3/4. Functionally, catalyzes the NADPH-dependent reduction of N-acetyl-5-glutamyl phosphate to yield N-acetyl-L-glutamate 5-semialdehyde. The polypeptide is N-acetyl-gamma-glutamyl-phosphate reductase (Desulfotalea psychrophila (strain LSv54 / DSM 12343)).